The chain runs to 88 residues: uncharacterized protein (88 aa).

This is an uncharacterized protein from Banana bunchy top virus (isolate Autralia) (BBTV).